We begin with the raw amino-acid sequence, 367 residues long: MKTKVGVLYGGKSPEHQVSLSTAMAVMNAIDPHKFDVIPIYITPEGQWIKGEQLTGPIEEIKQLQFTSAATALIPVSLNQVPAADSAAGGNEETIDVIFPLLHGPNGEDGTVQGLLEILNIPYVGNGVLASAVGMDKVMMKNLFAQAGLRQAKYIAVTKYDWQKRGETVYDRIERELGYPCFVKPANAGSSVGISKCKQRGDLKAAFIEAFQYDRKIIIEEAIVGREIEIGVIGNDEPICSVVGEIVPKKEFYDYEAKYEDGQTELIIPADVTKEQYETIKQMAITAFQVLDLSGLARVDFFLAEDGAVYINEVNTMPGFTPYSMFPLLWQHSGVPYPELIERLIALALERHQEKQTITYTFKKEKR.

An ATP-grasp domain is found at 141 to 346 (KNLFAQAGLR…YPELIERLIA (206 aa)). 174-229 (ERELGYPCFVKPANAGSSVGISKCKQRGDLKAAFIEAFQYDRKIIIEEAIVGREIE) provides a ligand contact to ATP. Asp-300, Glu-313, and Asn-315 together coordinate Mg(2+).

It belongs to the D-alanine--D-alanine ligase family. It depends on Mg(2+) as a cofactor. Mn(2+) is required as a cofactor.

The protein resides in the cytoplasm. It carries out the reaction 2 D-alanine + ATP = D-alanyl-D-alanine + ADP + phosphate + H(+). It participates in cell wall biogenesis; peptidoglycan biosynthesis. Cell wall formation. This chain is D-alanine--D-alanine ligase, found in Geobacillus kaustophilus (strain HTA426).